Here is a 354-residue protein sequence, read N- to C-terminus: D-alanine--D-alanine ligase (354 aa).

The ATP-grasp domain maps to 140-344 (KRLLRDSGLS…ISTLLTRLIM (205 aa)). Residue 170-225 (ADMFGLPFFVKPVNQGSSIGVAKVNDDYSFHSALDIAFFYSHKIIIESCIAGRELE) participates in ATP binding. Residues Asp-298, Glu-311, and Asn-313 each contribute to the Mg(2+) site.

The protein belongs to the D-alanine--D-alanine ligase family. Mg(2+) is required as a cofactor. Requires Mn(2+) as cofactor.

The protein resides in the cytoplasm. The enzyme catalyses 2 D-alanine + ATP = D-alanyl-D-alanine + ADP + phosphate + H(+). It functions in the pathway cell wall biogenesis; peptidoglycan biosynthesis. In terms of biological role, cell wall formation. The chain is D-alanine--D-alanine ligase from Blochmanniella floridana.